We begin with the raw amino-acid sequence, 704 residues long: Elongation factor G (704 aa).

A tr-type G domain is found at 10 to 290 (TKVRNIGIMA…AVVDYLPSPL (281 aa)). GTP contacts are provided by residues 19-26 (AHIDAGKT), 83-87 (DTPGH), and 137-140 (NKMD).

The protein belongs to the TRAFAC class translation factor GTPase superfamily. Classic translation factor GTPase family. EF-G/EF-2 subfamily.

Its subcellular location is the cytoplasm. In terms of biological role, catalyzes the GTP-dependent ribosomal translocation step during translation elongation. During this step, the ribosome changes from the pre-translocational (PRE) to the post-translocational (POST) state as the newly formed A-site-bound peptidyl-tRNA and P-site-bound deacylated tRNA move to the P and E sites, respectively. Catalyzes the coordinated movement of the two tRNA molecules, the mRNA and conformational changes in the ribosome. The sequence is that of Elongation factor G from Beutenbergia cavernae (strain ATCC BAA-8 / DSM 12333 / CCUG 43141 / JCM 11478 / NBRC 16432 / NCIMB 13614 / HKI 0122).